The primary structure comprises 191 residues: RNA polymerase sigma factor CnrH (191 aa).

Residues 49-62 (DVVQDTFVAAWHAL) carry the Polymerase core binding motif. Residues 156-175 (QPEAAAVLGLSVKAVEGRIG) constitute a DNA-binding region (H-T-H motif).

It belongs to the sigma-70 factor family. ECF subfamily.

Its function is as follows. Sigma factors are initiation factors that promote the attachment of RNA polymerase to specific initiation sites and are then released. This sigma factor regulates the genes for a membrane-located efflux system that confers resistance to nickel and cobalt. In terms of biological role, cnrH alone is able to activate CNR expression, while both CnrY and CrnX are needed for nickel induction of cnrH. Binds DNA in an RNA polymerase-dependent fashion. CnrH may be controlled by a CnrYX transmembrane anti-sigma factor complex which binds CnrH in the absence of Ni(2+). If Ni(2+) appears in the periplasm, it may be bound by CnrR (CnrX); the signal then would be transmitted by CnrY into the cytoplasm and CnrH would be released. The protein is RNA polymerase sigma factor CnrH (cnrH) of Cupriavidus metallidurans (strain ATCC 43123 / DSM 2839 / NBRC 102507 / CH34) (Ralstonia metallidurans).